Reading from the N-terminus, the 120-residue chain is Non-specific lipid-transfer protein 6 (120 aa).

The N-terminal stretch at 1–26 (MARSMSLKLACVVVLCLLVDAPLAQG) is a signal peptide. Cystine bridges form between cysteine 57-cysteine 102 and cysteine 77-cysteine 116.

It belongs to the plant LTP family. In terms of tissue distribution, specifically expressed in fiber cells.

Plant non-specific lipid-transfer proteins transfer phospholipids as well as galactolipids across membranes. May play a role in wax or cutin deposition in the cell walls of expanding epidermal cells and certain secretory tissues. The chain is Non-specific lipid-transfer protein 6 (LTP6) from Gossypium hirsutum (Upland cotton).